The following is a 315-amino-acid chain: Leukocidin-S subunit (315 aa).

The first 29 residues, 1–29 (MLKNKILATTLSVSLLAPLANPLLENAKA), serve as a signal peptide directing secretion.

This sequence belongs to the aerolysin family. In terms of assembly, leukocidin consists of two protein components: F and S.

Its function is as follows. Leukocidin causes cytotoxic changes in polymorphonuclear leukocytes. The chain is Leukocidin-S subunit (lukS) from Staphylococcus aureus.